The following is a 382-amino-acid chain: Lipid-A-disaccharide synthase (382 aa).

The protein belongs to the LpxB family.

It carries out the reaction 2-N,3-O-bis[(3R)-3-hydroxytetradecanoyl]-alpha-D-glucosaminyl 1-phosphate + UDP-2-N,3-O-bis[(3R)-3-hydroxytetradecanoyl]-alpha-D-glucosamine = lipid A disaccharide (E. coli) + UDP + H(+). It catalyses the reaction a lipid X + a UDP-2-N,3-O-bis[(3R)-3-hydroxyacyl]-alpha-D-glucosamine = a lipid A disaccharide + UDP + H(+). The protein operates within glycolipid biosynthesis; lipid IV(A) biosynthesis; lipid IV(A) from (3R)-3-hydroxytetradecanoyl-[acyl-carrier-protein] and UDP-N-acetyl-alpha-D-glucosamine: step 5/6. Its function is as follows. Condensation of UDP-2,3-diacylglucosamine and 2,3-diacylglucosamine-1-phosphate to form lipid A disaccharide, a precursor of lipid A, a phosphorylated glycolipid that anchors the lipopolysaccharide to the outer membrane of the cell. The sequence is that of Lipid-A-disaccharide synthase from Salmonella paratyphi A (strain AKU_12601).